A 156-amino-acid chain; its full sequence is Ribosome-binding factor A (156 aa).

A disordered region spans residues 129–156 (AGEAQPYRVEEEPGDSEDETPPSSQDQR).

It belongs to the RbfA family. In terms of assembly, monomer. Binds 30S ribosomal subunits, but not 50S ribosomal subunits or 70S ribosomes.

Its subcellular location is the cytoplasm. One of several proteins that assist in the late maturation steps of the functional core of the 30S ribosomal subunit. Associates with free 30S ribosomal subunits (but not with 30S subunits that are part of 70S ribosomes or polysomes). Required for efficient processing of 16S rRNA. May interact with the 5'-terminal helix region of 16S rRNA. The protein is Ribosome-binding factor A of Salinispora arenicola (strain CNS-205).